The following is a 145-amino-acid chain: uncharacterized protein (145 aa).

An N-terminal signal peptide occupies residues 1–22; it reads MLTRLVLSAHLSSTTSPPWTHA. A glycan (N-linked (GlcNAc...) asparagine) is linked at N98. Residues 103 to 145 form a disordered region; that stretch reads SSGQQRQAARQEEENSICKAHDSREGRLGYPLSAHQPGSGGPN.

It is found in the secreted. This is an uncharacterized protein from Homo sapiens (Human).